Here is an 86-residue protein sequence, read N- to C-terminus: uncharacterized protein (86 aa).

The next 2 membrane-spanning stretches (helical) occupy residues 20 to 38 (IQFW…SVYL) and 47 to 63 (FSTF…TKGV). Positions 67 to 86 (LSQRREQGKEQGREQGREQE) are disordered. The segment covering 69–86 (QRREQGKEQGREQGREQE) has biased composition (basic and acidic residues).

The protein resides in the cell membrane. This is an uncharacterized protein from Haemophilus influenzae (strain ATCC 51907 / DSM 11121 / KW20 / Rd).